A 395-amino-acid polypeptide reads, in one-letter code: Putative transport protein sll0063 (395 aa).

The next 8 helical transmembrane spans lie at Leu24 to Ala44, Ile50 to Leu70, Phe91 to Ala111, Val180 to Leu200, Ala245 to Leu265, Val269 to Ala289, Met295 to Ala315, and Phe328 to Val348.

This sequence belongs to the autoinducer-2 exporter (AI-2E) (TC 2.A.86) family.

It localises to the cell membrane. The chain is Putative transport protein sll0063 from Synechocystis sp. (strain ATCC 27184 / PCC 6803 / Kazusa).